A 300-amino-acid polypeptide reads, in one-letter code: Ribonuclease HIII (300 aa).

Positions 83–300 (IPIIGSDEVG…THKAQALLTK (218 aa)) constitute an RNase H type-2 domain. The a divalent metal cation site is built by Asp-89, Glu-90, and Asp-194.

The protein belongs to the RNase HII family. RnhC subfamily. Requires Mn(2+) as cofactor. It depends on Mg(2+) as a cofactor.

It is found in the cytoplasm. The enzyme catalyses Endonucleolytic cleavage to 5'-phosphomonoester.. Endonuclease that specifically degrades the RNA of RNA-DNA hybrids. The sequence is that of Ribonuclease HIII from Streptococcus pyogenes serotype M1.